The following is a 382-amino-acid chain: MLAVHFGAGNIGRGFIGSLLSQSGYEVVFVDINDELVRLLKEKQEYRVIIADENRQELLIRNVSAVNSQTEREKVIDYITKAHLITTAVGPHILPAIATILAEGLQKRITINKTPLHIIACENMIGGSDVLKSHVFEKISEADKPLFEKYYGFLNCAVDRIVPNQKHDDPLSVVVEPFFEWVIEKRNIIGAIPPIQGAHFVDDLKPYIERKLFTVNTGHAIASYLGYYKKLQTIQEAMCDQEIRSDVEKALHESGAVLVKKYGWNENEHQSYIQKIIQRFINPSISDEVVRVARSPIRKLGANDRLIGPATQYYDLFGQVPHGLVKGIAALLLFDYENDEEAVALQKTIQETGVEGALYQYSQLEKDHPLVIAIKDQWQHLK.

Position 3–14 (3–14 (AVHFGAGNIGRG)) interacts with NAD(+).

Belongs to the mannitol dehydrogenase family.

It catalyses the reaction D-mannitol 1-phosphate + NAD(+) = beta-D-fructose 6-phosphate + NADH + H(+). The protein is Mannitol-1-phosphate 5-dehydrogenase (mtlD) of Geobacillus stearothermophilus (Bacillus stearothermophilus).